A 229-amino-acid chain; its full sequence is MSSNAPVGQLAYVLHSRAYRESSALVDFLTPQGRLRAVLRNARGKAGTLARPFVPLEVEFRGRGELKNVGRMESAGIAAWLNGEALFSGLYLNELLIRLLPAEDPHPAVFDHYAATLLALAEGRPLEPLLRAFEWRLLDDLGYGFALDSDIHGAPIAADGLYRLQVDAGLEQVFLLQPGLFNGTELLAMADADWSAPGALSAAKRLMRQALAVHLGGRPLVSRELFRKP.

The protein belongs to the RecO family.

Involved in DNA repair and RecF pathway recombination. The sequence is that of DNA repair protein RecO from Pseudomonas fluorescens (strain ATCC BAA-477 / NRRL B-23932 / Pf-5).